The following is a 147-amino-acid chain: ATP synthase subunit 9, mitochondrial (147 aa).

Residues 1-66 (MASTRVLASR…TTRQAFQKRA (66 aa)) constitute a mitochondrion transit peptide. Helical transmembrane passes span 86–106 (SAAI…AALL) and 123–143 (AILG…VALM).

The protein belongs to the ATPase C chain family. As to quaternary structure, F-type ATPases have 2 components, CF(1) - the catalytic core - and CF(0) - the membrane proton channel. CF(1) has five subunits: alpha(3), beta(3), gamma(1), delta(1), epsilon(1). CF(0) has three main subunits: a, b and c.

The protein resides in the mitochondrion membrane. Its function is as follows. Mitochondrial membrane ATP synthase (F(1)F(0) ATP synthase or Complex V) produces ATP from ADP in the presence of a proton gradient across the membrane which is generated by electron transport complexes of the respiratory chain. F-type ATPases consist of two structural domains, F(1) - containing the extramembraneous catalytic core and F(0) - containing the membrane proton channel, linked together by a central stalk and a peripheral stalk. During catalysis, ATP synthesis in the catalytic domain of F(1) is coupled via a rotary mechanism of the central stalk subunits to proton translocation. Part of the complex F(0) domain. A homomeric c-ring of probably 10 subunits is part of the complex rotary element. This is ATP synthase subunit 9, mitochondrial (oli) from Neurospora crassa (strain ATCC 24698 / 74-OR23-1A / CBS 708.71 / DSM 1257 / FGSC 987).